Consider the following 159-residue polypeptide: Phosphopantetheine adenylyltransferase (159 aa).

Ser-10 is a binding site for substrate. Residues 10–11 (SF) and His-18 contribute to the ATP site. Substrate contacts are provided by Lys-42, Leu-77, and Lys-91. ATP contacts are provided by residues 92-94 (GIR), Glu-102, and 126-132 (NAHVSSS).

The protein belongs to the bacterial CoaD family. Homohexamer. Requires Mg(2+) as cofactor.

Its subcellular location is the cytoplasm. The enzyme catalyses (R)-4'-phosphopantetheine + ATP + H(+) = 3'-dephospho-CoA + diphosphate. It participates in cofactor biosynthesis; coenzyme A biosynthesis; CoA from (R)-pantothenate: step 4/5. In terms of biological role, reversibly transfers an adenylyl group from ATP to 4'-phosphopantetheine, yielding dephospho-CoA (dPCoA) and pyrophosphate. In Leifsonia xyli subsp. xyli (strain CTCB07), this protein is Phosphopantetheine adenylyltransferase.